A 197-amino-acid polypeptide reads, in one-letter code: Peptide deformylase (197 aa).

Positions 106 and 148 each coordinate Fe cation. Glutamate 149 is an active-site residue. Fe cation is bound at residue histidine 152.

The protein belongs to the polypeptide deformylase family. It depends on Fe(2+) as a cofactor.

The enzyme catalyses N-terminal N-formyl-L-methionyl-[peptide] + H2O = N-terminal L-methionyl-[peptide] + formate. Functionally, removes the formyl group from the N-terminal Met of newly synthesized proteins. Requires at least a dipeptide for an efficient rate of reaction. N-terminal L-methionine is a prerequisite for activity but the enzyme has broad specificity at other positions. The sequence is that of Peptide deformylase from Mycobacterium leprae (strain TN).